Here is a 444-residue protein sequence, read N- to C-terminus: Cerebral cavernous malformations 2 protein (444 aa).

A disordered region spans residues 1-37 (MEEEGKKGKKPGIVSPFKRVFLKGEKSRDKKAHEKVT). Phosphoserine is present on serine 15. Over residues 22–37 (LKGEKSRDKKAHEKVT) the composition is skewed to basic and acidic residues. The PID domain occupies 59–248 (LSDYIEKEVK…TPTHHLSLHS (190 aa)). Serine 164 is modified (phosphoserine). The interval 283–376 (SKTISESELS…NFLETIGVKD (94 aa)) is harmonin homology domain. Serine 384 and serine 393 each carry phosphoserine. Residues 391–423 (ALSTTSSSTTNGNRATGSSDDRSAPSEGDEWDR) form a disordered region. A compositionally biased stretch (low complexity) spans 392–408 (LSTTSSSTTNGNRATGS). Threonine 394 carries the post-translational modification Phosphothreonine. Position 396 is a phosphoserine (serine 396). Position 399 is a phosphothreonine (threonine 399).

This sequence belongs to the CCM2 family. In terms of assembly, part of a complex with MAP2K3, MAP3K3 and RAC1. Binds RAC1 directly and independently of its nucleotide-bound state. Interacts with HEG1 and KRIT1; KRIT1 greatly facilitates the interaction with HEG1. Interacts with PDCD10.

The protein resides in the cytoplasm. Component of the CCM signaling pathway which is a crucial regulator of heart and vessel formation and integrity. May act through the stabilization of endothelial cell junctions. May function as a scaffold protein for MAP2K3-MAP3K3 signaling. Seems to play a major role in the modulation of MAP3K3-dependent p38 activation induced by hyperosmotic shock. The chain is Cerebral cavernous malformations 2 protein (CCM2) from Homo sapiens (Human).